Here is a 1235-residue protein sequence, read N- to C-terminus: Phosphorylase b kinase regulatory subunit alpha, liver isoform (1235 aa).

A disordered region spans residues 636–655; sequence FSPDSEPDLGGYLEDSSPQE. 3 positions are modified to phosphoserine: Ser-695, Ser-729, and Ser-735. The interval 807–837 is calmodulin-binding; it reads LSELYGKAGLNQEWSLIRYISGLLRKKVEVL. 3 positions are modified to phosphoserine: Ser-983, Ser-1015, and Ser-1044. The disordered stretch occupies residues 1033–1060; it reads SIKSVRSSTPSSPTGTSSTDSGGQHLGW. A compositionally biased stretch (low complexity) spans 1039–1055; sequence SSTPSSPTGTSSTDSGG. The tract at residues 1059–1099 is calmodulin-binding; that stretch reads GWGEQQGQWLRRRRLDGAINRVPVGFYQKVWKILQKCHGLS. The S-farnesyl cysteine moiety is linked to residue Cys-1232.

Belongs to the phosphorylase b kinase regulatory chain family. As to quaternary structure, hexadecamer of 4 heterotetramers, each composed of alpha, beta, gamma, and delta subunits. Alpha (PHKA1 or PHKA2) and beta (PHKB) are regulatory subunits, gamma (PHKG1 or PHKG2) is the catalytic subunit, and delta is calmodulin. In terms of processing, although the final Cys may be farnesylated, the terminal tripeptide is probably not removed, and the C-terminus is not methylated.

Its subcellular location is the cell membrane. It participates in glycan biosynthesis; glycogen metabolism. Its activity is regulated as follows. By phosphorylation of various serine residues and by calcium. Its function is as follows. Phosphorylase b kinase catalyzes the phosphorylation of serine in certain substrates, including troponin I. The alpha chain may bind calmodulin. The chain is Phosphorylase b kinase regulatory subunit alpha, liver isoform (Phka2) from Mus musculus (Mouse).